The following is a 683-amino-acid chain: MASKLTTTSQHILENLGGPDNITSMTHCATRLRFQVKDQSIVDQQEIDSDPSVLGVVPQGSTGMQVVMGGSVANYYQEILKLDGMKHFADGEATESSSKKEYGGVRGKYSWIDYAFEFLSDTFRPILWALLGASLIITLLVLADTFGLQDFRAPMDEQPDTYVFLHSMWRSVFYFLPIMVGATAARKLGANEWIGAAIPAALLTPEFLALGSAGDTVTVFGLPMVLNDYSGQVFPPLIAAIGLYWVEKGLKKIIPEAVQMVFVPFFSLLIMIPATAFLLGPFGIGVGNGISNLLEAINNFSPFILSIVIPLLYPFLVPLGLHWPLNAIMIQNINTLGYDFIQGPMGAWNFACFGLVTGVFLLSIKERNKAMRQVSLGGMLAGLLGGISEPSLYGVLLRFKKTYFRLLPGCLAGGIVMGIFDIKAYAFVFTSLLTIPAMDPWLGYTIGIAVAFFVSMFLVLALDYRSNEERDEARAKVAADKQAEEDLKAEANATPAAPVAAAGAGAGAGAGAAAGAATAVAAKPKLAAGEVVDIVSPLEGKAIPLSEVPDPIFAAGKLGPGIAIQPTGNTVVAPADATVILVQKSGHAVALRLDSGVEILVHVGLDTVQLGGEGFTVHVERRQQVKAGDPLITFDADFIRSKDLPLITPVVVSNAAKFGEIEGIPADQANSSTTVIKVNGKNE.

Residues 1 to 89 form the PTS EIIB type-1 domain; it reads MASKLTTTSQ…LKLDGMKHFA (89 aa). Cys28 (phosphocysteine intermediate; for EIIB activity) is an active-site residue. Residues 117 to 476 form the PTS EIIC type-1 domain; that stretch reads EFLSDTFRPI…NEERDEARAK (360 aa). 10 helical membrane-spanning segments follow: residues 126 to 146, 162 to 182, 193 to 213, 225 to 245, 260 to 280, 303 to 323, 344 to 364, 376 to 396, 409 to 429, and 442 to 462; these read ILWA…ADTF, YVFL…MVGA, WIGA…LGSA, VLND…GLYW, MVFV…FLLG, FILS…GLHW, PMGA…LLSI, LGGM…YGVL, GCLA…AFVF, and LGYT…VLAL. Positions 550 to 654 constitute a PTS EIIA type-1 domain; sequence DPIFAAGKLG…PLITPVVVSN (105 aa). Residue His602 is the Tele-phosphohistidine intermediate; for EIIA activity of the active site.

The protein resides in the cell membrane. It catalyses the reaction D-mannose(out) + N(pros)-phospho-L-histidyl-[protein] = D-mannose 6-phosphate(in) + L-histidyl-[protein]. Functionally, the phosphoenolpyruvate-dependent sugar phosphotransferase system (sugar PTS), a major carbohydrate active -transport system, catalyzes the phosphorylation of incoming sugar substrates concomitantly with their translocation across the cell membrane. This system is involved in mannose transport. The polypeptide is PTS system mannose-specific EIIBCA component (ptsM) (Corynebacterium glutamicum (strain ATCC 13032 / DSM 20300 / JCM 1318 / BCRC 11384 / CCUG 27702 / LMG 3730 / NBRC 12168 / NCIMB 10025 / NRRL B-2784 / 534)).